Reading from the N-terminus, the 308-residue chain is Protein translocase subunit SecF (308 aa).

A run of 6 helical transmembrane segments spans residues 10–30 (LFFA…AIFG), 129–149 (LAVS…FRGV), 160–180 (IIAM…GGVL), 181–201 (FGWQ…GFSV), 241–261 (TQLM…GITL), and 264–284 (FAII…FIAA).

This sequence belongs to the SecD/SecF family. SecF subfamily. As to quaternary structure, forms a complex with SecD. Part of the essential Sec protein translocation apparatus which comprises SecA, SecYEG and auxiliary proteins SecDF. Other proteins may also be involved.

It localises to the cell membrane. Its function is as follows. Part of the Sec protein translocase complex. Interacts with the SecYEG preprotein conducting channel. SecDF uses the proton motive force (PMF) to complete protein translocation after the ATP-dependent function of SecA. This is Protein translocase subunit SecF from Anaerolinea thermophila (strain DSM 14523 / JCM 11388 / NBRC 100420 / UNI-1).